The following is a 349-amino-acid chain: Glycerol-3-phosphate dehydrogenase [NAD(+)], cytoplasmic (349 aa).

10–15 contacts NAD(+); the sequence is GSGNWG. Residue K120 coordinates substrate. A153 provides a ligand contact to NAD(+). S154 bears the Phosphoserine mark. Residue K204 is the Proton acceptor of the active site. Position 269 (R269) interacts with NAD(+). 269–270 is a binding site for substrate; it reads RN. K289 is modified (N6-succinyllysine). 2 residues coordinate NAD(+): K296 and Q298. The residue at position 326 (Y326) is a Phosphotyrosine.

Belongs to the NAD-dependent glycerol-3-phosphate dehydrogenase family. In terms of assembly, homodimer.

It localises to the cytoplasm. It carries out the reaction sn-glycerol 3-phosphate + NAD(+) = dihydroxyacetone phosphate + NADH + H(+). In terms of biological role, has glycerol-3-phosphate dehydrogenase activity. The polypeptide is Glycerol-3-phosphate dehydrogenase [NAD(+)], cytoplasmic (GPD1) (Pongo abelii (Sumatran orangutan)).